The following is a 502-amino-acid chain: Probable cytosol aminopeptidase (502 aa).

Residues K269 and D274 each coordinate Mn(2+). K281 is a catalytic residue. Mn(2+)-binding residues include D292, D351, and E353. R355 is a catalytic residue.

This sequence belongs to the peptidase M17 family. The cofactor is Mn(2+).

It localises to the cytoplasm. It catalyses the reaction Release of an N-terminal amino acid, Xaa-|-Yaa-, in which Xaa is preferably Leu, but may be other amino acids including Pro although not Arg or Lys, and Yaa may be Pro. Amino acid amides and methyl esters are also readily hydrolyzed, but rates on arylamides are exceedingly low.. The catalysed reaction is Release of an N-terminal amino acid, preferentially leucine, but not glutamic or aspartic acids.. In terms of biological role, presumably involved in the processing and regular turnover of intracellular proteins. Catalyzes the removal of unsubstituted N-terminal amino acids from various peptides. This Shewanella denitrificans (strain OS217 / ATCC BAA-1090 / DSM 15013) protein is Probable cytosol aminopeptidase.